Consider the following 634-residue polypeptide: ATP-dependent zinc metalloprotease FtsH (634 aa).

The Cytoplasmic segment spans residues 1–5 (MNALK). Residues 6–26 (NFFIWAIIIGAAIVAFNLFEG) form a helical membrane-spanning segment. The Periplasmic segment spans residues 27–100 (KREFTTKVSL…VANPEPPGGW (74 aa)). A helical membrane pass occupies residues 101–121 (LVNVFLSWLPILFFIGIWIFL). Topologically, residues 122–634 (LRQMSGGGNV…KSEEVKEEVV (513 aa)) are cytoplasmic. 195 to 202 (GEPGVGKT) provides a ligand contact to ATP. His-418 lines the Zn(2+) pocket. Glu-419 is a catalytic residue. Zn(2+) is bound by residues His-422 and Asp-496. The interval 615-634 (DRKSEENKELKSEEVKEEVV) is disordered.

In the central section; belongs to the AAA ATPase family. It in the C-terminal section; belongs to the peptidase M41 family. The isolated protease domain (residues 405-634) forms a stable hexamer. Zn(2+) is required as a cofactor.

Its subcellular location is the cell inner membrane. In terms of biological role, acts as a processive, ATP-dependent zinc metallopeptidase for both cytoplasmic and membrane proteins. Plays a role in the quality control of integral membrane proteins. This chain is ATP-dependent zinc metalloprotease FtsH, found in Aquifex aeolicus (strain VF5).